Reading from the N-terminus, the 403-residue chain is Tripartite motif-containing protein 59 (403 aa).

Residues Cys-10–Arg-60 form an RING-type zinc finger. Residues Pro-92–Leu-134 form a B box-type zinc finger. Zn(2+) is bound by residues Cys-97, His-100, Cys-120, and His-126. Positions Leu-163–Ser-246 form a coiled coil. A helical transmembrane segment spans residues Ile-329–Asn-349.

It belongs to the TRIM/RBCC family. As to quaternary structure, interacts with ECSIT.

It localises to the endoplasmic reticulum membrane. The enzyme catalyses S-ubiquitinyl-[E2 ubiquitin-conjugating enzyme]-L-cysteine + [acceptor protein]-L-lysine = [E2 ubiquitin-conjugating enzyme]-L-cysteine + N(6)-ubiquitinyl-[acceptor protein]-L-lysine.. The protein operates within protein modification; protein ubiquitination. In terms of biological role, E3 ubiquitin ligase involved in different processes such as development and immune response. Serves as a negative regulator for innate immune signaling pathways by suppressing RLR-induced activation of IRF3/7 and NF-kappa-B via interaction with adapter ECSIT. Regulates autophagy through modulating both the transcription and the ubiquitination of BECN1. On the one hand, regulates the transcription of BECN1 through negatively modulating the NF-kappa-B pathway. On the other hand, regulates TRAF6-mediated 'Lys-63'-linked ubiquitination of BECN1, thus affecting the formation of the BECN1-PIK3C3 complex. In addition, mediates 'Lys-48'-linked ubiquitination of TRAF6 and thereby promotes TRAF6 proteasomal degradation. Also acts as a critical regulator for early embryo development from blastocyst stage to gastrula through modulating F-actin assembly and WASH1 'Lys-63'-linked ubiquitination. This is Tripartite motif-containing protein 59 (TRIM59) from Homo sapiens (Human).